The primary structure comprises 248 residues: 2,3-bisphosphoglycerate-dependent phosphoglycerate mutase (248 aa).

Substrate-binding positions include 8 to 15 (RHGESVWN), 21 to 22 (TG), Arg60, 87 to 90 (ERHY), Lys98, and 114 to 115 (RR). The active-site Tele-phosphohistidine intermediate is His9. Glu87 (proton donor/acceptor) is an active-site residue. A disordered region spans residues 116-135 (SYDTPPPPMEVSDPRHPSHD). Substrate is bound at residue 183 to 184 (GN).

Belongs to the phosphoglycerate mutase family. BPG-dependent PGAM subfamily. Homodimer.

It catalyses the reaction (2R)-2-phosphoglycerate = (2R)-3-phosphoglycerate. Its pathway is carbohydrate degradation; glycolysis; pyruvate from D-glyceraldehyde 3-phosphate: step 3/5. Catalyzes the interconversion of 2-phosphoglycerate and 3-phosphoglycerate. This chain is 2,3-bisphosphoglycerate-dependent phosphoglycerate mutase, found in Bdellovibrio bacteriovorus (strain ATCC 15356 / DSM 50701 / NCIMB 9529 / HD100).